The sequence spans 838 residues: MSDTDGKKPLGLGGGSRSGQVKQSFSHGRTKSVLVETKRKRVVVPKPGASGSSTTTSSPSHLGDPAKRPAGISDAEMERRLAALRAAKLREVDDAKRRAEEERQREEERQRRREELEAKEREERERAEALRQKAEDEERARREAEEAARRAEEAKRAPAPAPAAAQPDAADSRASAPTSAKPGLPPSRKEREREADRDRTTKKDDSRRSGKLTLNEALSGEGGRTRSLAAMKREQEKARQKAMGFGHKAEKQVRDVQLPETIVVQELANRMAERAADVVKALMKMGMMVTMNQSIDADTAELVIEEFGHRAVRVSDADVEHVIDTVEDKAEDLQPRPPIITIMGHVDHGKTSLLDAIRKTSVVSGEAGGITQHIGAYQVKTESGAVLTFLDTPGHAAFTSMRARGAQVTDIVVLVVAADDAVMPQTVEAIKHAKAAKVPMIVAINKIDKPDADPNKVRTDLLQHEVIVEKMSGDVLDVEVSAKTGLGLDELLENIALQAELLDLRANPKRAAQGAVIEAKLDVGRGPVATVLVQHGTLKRGDIFVVGQQWGKVRALVNDKGERVDEAGPSVPVEVLGLNGTPEAGDVLNVVETEAQAREIADYREKAARDKRAAAGAATTLEQLMAKAKADADVAELPVVIKADVQGSAEAIVQALEKVGNEEVRVRVLHYGVGAITETDIGLAEASQAAVIGFNVRANASARQAANQKSVEIRYYSVIYDLVDDVKKAASGLLKAEVREHFIGYARIQEVFRITGVGNVAGCLVTEGVARRSAGVRLLRDNVVIHEGTLKTLKRFKDEVKEVQSGQECGMAFERYEDIRAGDVIEIFEREEVERKLA.

The interval 1-235 is disordered; sequence MSDTDGKKPL…RSLAAMKREQ (235 aa). The span at 18 to 27 shows a compositional bias: polar residues; the sequence is SGQVKQSFSH. Over residues 50 to 60 the composition is skewed to low complexity; that stretch reads SGSSTTTSSPS. Positions 88–156 are enriched in basic and acidic residues; the sequence is KLREVDDAKR…AARRAEEAKR (69 aa). Residues 162–177 are compositionally biased toward low complexity; that stretch reads PAAAQPDAADSRASAP. Over residues 187–208 the composition is skewed to basic and acidic residues; it reads SRKEREREADRDRTTKKDDSRR. One can recognise a tr-type G domain in the interval 335–509; that stretch reads PRPPIITIMG…ELLDLRANPK (175 aa). The G1 stretch occupies residues 344–351; the sequence is GHVDHGKT. 344–351 is a GTP binding site; the sequence is GHVDHGKT. Residues 369 to 373 are G2; that stretch reads GITQH. The tract at residues 391-394 is G3; sequence DTPG. Residues 391 to 395 and 445 to 448 contribute to the GTP site; these read DTPGH and NKID. The segment at 445–448 is G4; the sequence is NKID. Positions 481 to 483 are G5; that stretch reads SAK.

The protein belongs to the TRAFAC class translation factor GTPase superfamily. Classic translation factor GTPase family. IF-2 subfamily.

It is found in the cytoplasm. Its function is as follows. One of the essential components for the initiation of protein synthesis. Protects formylmethionyl-tRNA from spontaneous hydrolysis and promotes its binding to the 30S ribosomal subunits. Also involved in the hydrolysis of GTP during the formation of the 70S ribosomal complex. This chain is Translation initiation factor IF-2, found in Cereibacter sphaeroides (strain ATCC 17025 / ATH 2.4.3) (Rhodobacter sphaeroides).